The sequence spans 612 residues: Chaperone protein DnaK (612 aa).

At Thr-173 the chain carries Phosphothreonine; by autocatalysis. The tract at residues 576–612 (AAKQAQAQQDGGAGAKKADDNVVDAEYEEVNDDKDQK) is disordered. A compositionally biased stretch (acidic residues) spans 596 to 612 (NVVDAEYEEVNDDKDQK).

It belongs to the heat shock protein 70 family.

Its function is as follows. Acts as a chaperone. The sequence is that of Chaperone protein DnaK from Bacillus licheniformis (strain ATCC 14580 / DSM 13 / JCM 2505 / CCUG 7422 / NBRC 12200 / NCIMB 9375 / NCTC 10341 / NRRL NRS-1264 / Gibson 46).